Reading from the N-terminus, the 342-residue chain is Glutamyl endopeptidase (342 aa).

The first 29 residues, 1-29, serve as a signal peptide directing secretion; the sequence is MKGKFLKVSSLFVATLTTATLVSSPAANA. Residues 30–68 constitute a propeptide that is removed on maturation; sequence LSSKAMDNHPQQTQSSKQQTPKIKKGGNLKPLEQREHAN. A disordered region spans residues 33–63; sequence KAMDNHPQQTQSSKQQTPKIKKGGNLKPLEQ. A compositionally biased stretch (low complexity) spans 39 to 50; that stretch reads PQQTQSSKQQTP. Catalysis depends on charge relay system residues His119, Asp161, and Ser237. The tract at residues 283 to 342 is disordered; sequence FANDDQPNNPDNPDNPNNPDNPNNPDNPNNPDEPNNPDNPNNPDNPDNGDNNNSDNPDAA. Residues 286-342 are compositionally biased toward low complexity; it reads DDQPNNPDNPDNPNNPDNPNNPDNPNNPDEPNNPDNPNNPDNPDNGDNNNSDNPDAA. A run of 13 repeats spans residues 289–291, 292–294, 295–297, 298–300, 301–303, 304–306, 307–309, 310–312, 316–318, 319–321, 322–324, 325–327, and 328–330. The 13 X 3 AA repeats of P-[DN]-N stretch occupies residues 289-330; the sequence is PNNPDNPDNPNNPDNPNNPDNPNNPDEPNNPDNPNNPDNPDN.

Belongs to the peptidase S1B family. Post-translationally, proteolytically cleaved by aureolysin (aur). This cleavage leads to the activation of SspA.

It localises to the secreted. It catalyses the reaction Preferential cleavage: Glu-|-Xaa, Asp-|-Xaa.. Its function is as follows. Preferentially cleaves peptide bonds on the carboxyl-terminal side of aspartate and glutamate. Along with other extracellular proteases it is involved in colonization and infection of human tissues. Required for proteolytic maturation of thiol protease SspB and inactivation of SspC, an inhibitor of SspB. It is the most important protease for degradation of fibronectin-binding protein (FnBP) and surface protein A, which are involved in adherence to host cells. May also protect bacteria against host defense mechanism by cleaving the immunoglobulin classes IgG, IgA and IgM. May be involved in the stability of secreted lipases. This is Glutamyl endopeptidase (sspA) from Staphylococcus aureus (strain Mu50 / ATCC 700699).